The chain runs to 258 residues: UPF0246 protein ACIAD2218 (258 aa).

This sequence belongs to the UPF0246 family.

The chain is UPF0246 protein ACIAD2218 from Acinetobacter baylyi (strain ATCC 33305 / BD413 / ADP1).